A 434-amino-acid chain; its full sequence is ATP-dependent RNA helicase sub2 (434 aa).

A Q motif motif is present at residues 59–87; sequence TGFRDFLLKGELLRAITDCGFEHPSEVQQ. One can recognise a Helicase ATP-binding domain in the interval 90-265; the sequence is IPTAILNVDV…KKFMRNPLEV (176 aa). Residue 103–110 coordinates ATP; the sequence is AKSGLGKT. The DECD box signature appears at 212–215; the sequence is DECD. Residues 293-430 form the Helicase C-terminal domain; sequence KLNELLDSLE…EYPEEGVDSS (138 aa).

The protein belongs to the DEAD box helicase family. DECD subfamily.

The protein localises to the nucleus. The catalysed reaction is ATP + H2O = ADP + phosphate + H(+). ATP-binding RNA helicase involved in transcription elongation and required for the export of mRNA out of the nucleus. SUB2 also plays a role in pre-mRNA splicing and spliceosome assembly. May be involved in rDNA and telomeric silencing, and maintenance of genome integrity. The protein is ATP-dependent RNA helicase sub2 (sub2) of Emericella nidulans (strain FGSC A4 / ATCC 38163 / CBS 112.46 / NRRL 194 / M139) (Aspergillus nidulans).